A 39-amino-acid chain; its full sequence is Natriuretic peptide TNPc (39 aa).

A disulfide bond links cysteine 9 and cysteine 25.

The protein belongs to the natriuretic peptide family. In terms of tissue distribution, expressed by the venom gland.

The protein localises to the secreted. Snake venom natriuretic peptide that exhibits vasoactive and hypotensive activity. Produces a near complete relaxation in pre-contracted aortae by activating the natriuretic peptide receptor 1 (NPR1). Stimulates cGMP production through the natriuretic peptide receptor 1 (NPR1) with high potencies for the rat NPR1 (EC(50)=100 nM), and very weak potencies over human NPR1 (28% activation at 10 uM). In vivo, reduces both systolic and diastolic blood pressure with no effect on heart rate, when intravenously injected in conscious rabbits. Also enhances the bradycardia due to cardiac afferent stimulation (Bezold-Jarisch reflex). The chain is Natriuretic peptide TNPc from Oxyuranus microlepidotus (Inland taipan).